The following is a 622-amino-acid chain: Phosphomethylpyrimidine synthase (622 aa).

Positions Glu109–Asn130 are disordered. Residues Asn234, Met263, Tyr292, His328, Ser348–Gly350, Asp389–Arg392, and Glu428 each bind substrate. His432 is a binding site for Zn(2+). Tyr455 provides a ligand contact to substrate. His496 lines the Zn(2+) pocket. The [4Fe-4S] cluster site is built by Cys576, Cys579, and Cys584.

The protein belongs to the ThiC family. As to quaternary structure, homodimer. Requires [4Fe-4S] cluster as cofactor.

The enzyme catalyses 5-amino-1-(5-phospho-beta-D-ribosyl)imidazole + S-adenosyl-L-methionine = 4-amino-2-methyl-5-(phosphooxymethyl)pyrimidine + CO + 5'-deoxyadenosine + formate + L-methionine + 3 H(+). The protein operates within cofactor biosynthesis; thiamine diphosphate biosynthesis. Catalyzes the synthesis of the hydroxymethylpyrimidine phosphate (HMP-P) moiety of thiamine from aminoimidazole ribotide (AIR) in a radical S-adenosyl-L-methionine (SAM)-dependent reaction. The chain is Phosphomethylpyrimidine synthase from Baumannia cicadellinicola subsp. Homalodisca coagulata.